A 380-amino-acid chain; its full sequence is Selenoprotein P (380 aa).

A signal peptide spans 1–19; that stretch reads MWRSLGLALALCLLPYGGA. Sec-59 is a non-standard amino acid (selenocysteine). Residues Asn-83, Asn-176, and Asn-195 are each glycosylated (N-linked (GlcNAc...) asparagine). Residues 196-257 form a disordered region; sequence KTAEPSEAHS…RGQHRQGHLE (62 aa). Residues 221-237 show a composition bias toward polar residues; the sequence is SKPSENQQPGPSETTLP. The segment covering 241–253 has biased composition (basic residues); that stretch reads LHHHHRHRGQHRQ. Sec-259 is a non-standard amino acid (selenocysteine). At Ser-264 the chain carries Phosphoserine. Residues Sec-277, Sec-318, Sec-330, and Sec-352 are each a non-standard amino acid (selenocysteine). Residues 346–380 are disordered; the sequence is RSPPAAUQNQPMNPMEANPNUSUDNQTRKUKUHSN. The span at 348-360 shows a compositional bias: low complexity; it reads PPAAUQNQPMNPM. N-linked (GlcNAc...) asparagine glycosylation is present at Asn-365. Residues Sec-366 and Sec-368 are each a non-standard amino acid (selenocysteine). Asn-370 carries an N-linked (GlcNAc...) asparagine glycan. Residues Sec-375 and Sec-377 are each a non-standard amino acid (selenocysteine).

It belongs to the selenoprotein P family. Post-translationally, phosphorylation sites are present in the extracellular medium. In terms of tissue distribution, in the kidney, expressed in the cortex with no expression observed in the medulla (at protein level). Expressed by the liver and secreted in plasma.

The protein localises to the secreted. Its function is as follows. Might be responsible for some of the extracellular antioxidant defense properties of selenium or might be involved in the transport of selenium. May supply selenium to tissues such as brain and testis. In Mus musculus (Mouse), this protein is Selenoprotein P.